The sequence spans 231 residues: NADH-ubiquinone oxidoreductase chain 4 (231 aa).

7 helical membrane-spanning segments follow: residues 1–21 (PIAG…YGII), 34–54 (VFLP…LTCL), 61–80 (SLIA…AIII), 84–106 (WGLS…LFCL), 128–148 (ILPM…ATPP), 156–176 (LLII…LGLS), and 211–231 (LLMI…ELVI).

The protein belongs to the complex I subunit 4 family.

It is found in the mitochondrion membrane. It carries out the reaction a ubiquinone + NADH + 5 H(+)(in) = a ubiquinol + NAD(+) + 4 H(+)(out). Core subunit of the mitochondrial membrane respiratory chain NADH dehydrogenase (Complex I) that is believed to belong to the minimal assembly required for catalysis. Complex I functions in the transfer of electrons from NADH to the respiratory chain. The immediate electron acceptor for the enzyme is believed to be ubiquinone. The polypeptide is NADH-ubiquinone oxidoreductase chain 4 (MT-ND4) (Tropidolaemus wagleri (Wagler's pit viper)).